Consider the following 41-residue polypeptide: Photosystem I reaction center subunit IX (41 aa).

Residues Tyr-7–Ile-27 traverse the membrane as a helical segment.

This sequence belongs to the PsaJ family.

It localises to the plastid. The protein localises to the chloroplast thylakoid membrane. Its function is as follows. May help in the organization of the PsaE and PsaF subunits. This is Photosystem I reaction center subunit IX from Physcomitrium patens (Spreading-leaved earth moss).